The chain runs to 120 residues: Prefoldin subunit beta (120 aa).

This sequence belongs to the prefoldin subunit beta family. Heterohexamer of two alpha and four beta subunits.

It localises to the cytoplasm. Molecular chaperone capable of stabilizing a range of proteins. Seems to fulfill an ATP-independent, HSP70-like function in archaeal de novo protein folding. This is Prefoldin subunit beta from Methanospirillum hungatei JF-1 (strain ATCC 27890 / DSM 864 / NBRC 100397 / JF-1).